The sequence spans 343 residues: UDP-3-O-acylglucosamine N-acyltransferase 2 (343 aa).

The Proton acceptor role is filled by histidine 251.

The protein belongs to the transferase hexapeptide repeat family. LpxD subfamily. Homotrimer.

It carries out the reaction a UDP-3-O-[(3R)-3-hydroxyacyl]-alpha-D-glucosamine + a (3R)-hydroxyacyl-[ACP] = a UDP-2-N,3-O-bis[(3R)-3-hydroxyacyl]-alpha-D-glucosamine + holo-[ACP] + H(+). It participates in bacterial outer membrane biogenesis; LPS lipid A biosynthesis. Its function is as follows. Catalyzes the N-acylation of UDP-3-O-acylglucosamine using 3-hydroxyacyl-ACP as the acyl donor. Is involved in the biosynthesis of lipid A, a phosphorylated glycolipid that anchors the lipopolysaccharide to the outer membrane of the cell. The protein is UDP-3-O-acylglucosamine N-acyltransferase 2 of Legionella pneumophila subsp. pneumophila (strain Philadelphia 1 / ATCC 33152 / DSM 7513).